We begin with the raw amino-acid sequence, 67 residues long: MTLPKILDVIQMDDSSLSEEIIAIKRQLFDLRLKRATRQDFKPHLFKHSKHRLAQLLTVEKSRAQSN.

This sequence belongs to the universal ribosomal protein uL29 family.

Its subcellular location is the plastid. The protein localises to the chloroplast. The chain is Large ribosomal subunit protein uL29c (rpl29) from Porphyra purpurea (Red seaweed).